We begin with the raw amino-acid sequence, 169 residues long: 6,7-dimethyl-8-ribityllumazine synthase (169 aa).

Residues Phe24, Ala58–Glu60, and Ala82–Ile84 each bind 5-amino-6-(D-ribitylamino)uracil. Glu87–Thr88 provides a ligand contact to (2S)-2-hydroxy-3-oxobutyl phosphate. The active-site Proton donor is the His90. Asn115 contacts 5-amino-6-(D-ribitylamino)uracil. Arg129 provides a ligand contact to (2S)-2-hydroxy-3-oxobutyl phosphate.

It belongs to the DMRL synthase family.

It carries out the reaction (2S)-2-hydroxy-3-oxobutyl phosphate + 5-amino-6-(D-ribitylamino)uracil = 6,7-dimethyl-8-(1-D-ribityl)lumazine + phosphate + 2 H2O + H(+). The protein operates within cofactor biosynthesis; riboflavin biosynthesis; riboflavin from 2-hydroxy-3-oxobutyl phosphate and 5-amino-6-(D-ribitylamino)uracil: step 1/2. Catalyzes the formation of 6,7-dimethyl-8-ribityllumazine by condensation of 5-amino-6-(D-ribitylamino)uracil with 3,4-dihydroxy-2-butanone 4-phosphate. This is the penultimate step in the biosynthesis of riboflavin. This is 6,7-dimethyl-8-ribityllumazine synthase from Burkholderia vietnamiensis (strain G4 / LMG 22486) (Burkholderia cepacia (strain R1808)).